The primary structure comprises 324 residues: Delta-aminolevulinic acid dehydratase (324 aa).

The Zn(2+) site is built by Cys120, Cys122, and Cys130. Lys195 functions as the Schiff-base intermediate with substrate in the catalytic mechanism. 5-aminolevulinate is bound by residues Arg205 and Arg217. Mg(2+) is bound at residue Glu233. Residue Lys248 is the Schiff-base intermediate with substrate of the active site. Ser274 and Tyr313 together coordinate 5-aminolevulinate.

Belongs to the ALAD family. In terms of assembly, homooctamer. Requires Zn(2+) as cofactor.

It catalyses the reaction 2 5-aminolevulinate = porphobilinogen + 2 H2O + H(+). The protein operates within porphyrin-containing compound metabolism; protoporphyrin-IX biosynthesis; coproporphyrinogen-III from 5-aminolevulinate: step 1/4. Its function is as follows. Catalyzes an early step in the biosynthesis of tetrapyrroles. Binds two molecules of 5-aminolevulinate per subunit, each at a distinct site, and catalyzes their condensation to form porphobilinogen. The chain is Delta-aminolevulinic acid dehydratase (hemB) from Bacillus subtilis (strain 168).